A 297-amino-acid polypeptide reads, in one-letter code: MLREMLGCCKVYISEARNKTALEAIERALKPFPPAAIVNKFEDAAYGRVGYTVVSSLANGSSSSLKNAVFAMVKTALDTINLELHCGSHPRLGVVDHICFHPLSQTSIEQVSSVANSLAMDIGSILRVPTYLYGAAEKEQCTLDSIRRKLGYFKANREGHEWAGGFDLEMVPLKPDAGPQEVSKAKGVVAVGACGWVSNYNVPVMSNDLKAVRRIARKTSERGGGLASVQTMALVHGEGVIEVACNLLNPSQVGGDEVQGLIERLGREEGLLVGKGYYTDYTPDQIVERYMDLLNNS.

Positions 2-196 are formiminotransferase N-subdomain; the sequence is LREMLGCCKV…GVVAVGACGW (195 aa). Histidine 89 serves as the catalytic For formimidoyltransferase activity. 178-187 is a folate binding site; sequence GPQEVSKAKG.

Belongs to the formiminotransferase family. Expressed constitutively in roots, stems, leaves and flowers.

It localises to the golgi apparatus. Its subcellular location is the trans-Golgi network. The catalysed reaction is (6S)-5-formyl-5,6,7,8-tetrahydrofolate + L-glutamate = N-formyl-L-glutamate + (6S)-5,6,7,8-tetrahydrofolate + H(+). It catalyses the reaction 5-formimidoyltetrahydrofolate + L-glutamate = N-formimidoyl-L-glutamate + (6S)-5,6,7,8-tetrahydrofolate. It participates in one-carbon metabolism; tetrahydrofolate interconversion. Involved in the regulation of root growth. May regulate sorting and/or transportation of trans-Golgi network (TGN) vesicles in root cap peripheral cells, thus influencing the extracellular secretion of mucilage components in the root cap. In Arabidopsis thaliana (Mouse-ear cress), this protein is Formiminotransferase cyclodeaminase-like protein.